Reading from the N-terminus, the 175-residue chain is MNESENSPQHNEVTVPMVEDTSSNADIPMEQIQREDNKNYDKHDNECFDMNGNHNNNSDNLQFDSVPSSATKDLKNIKSVTNQNVKIEESSSTNSVIEESSEPKISKLENVNLAATVGGSQTRKYLNTNVTPHLLAGMRLIAVQQPEDPLRVLGEYLIEQSNILKSGEKESNASK.

A compositionally biased stretch (polar residues) spans 1 to 12; sequence MNESENSPQHNE. The tract at residues 1 to 45 is disordered; sequence MNESENSPQHNEVTVPMVEDTSSNADIPMEQIQREDNKNYDKHDN. The segment covering 32–45 has biased composition (basic and acidic residues); the sequence is IQREDNKNYDKHDN. The tract at residues 121–162 is DPY-30; it reads QTRKYLNTNVTPHLLAGMRLIAVQQPEDPLRVLGEYLIEQSN.

Belongs to the dpy-30 family. As to quaternary structure, component of the Set1C/COMPASS complex which consists of SET1(2), BRE2(2), SPP1(2), SDC1(1), SHG1(1), SWD1(1), SWD2(1), and SWD3(1). Interacts directly with BRE2.

It localises to the nucleus. In terms of biological role, component of the Set1C/COMPASS complex that specifically mono-, di- and trimethylates histone H3 to form H3K4me1/2/3, which subsequently plays a role in telomere length maintenance and transcription elongation regulation. COMPASS recognizes ubiquitinated H2B on one face of the nucleosome which stimulates the methylation of H3 on the opposing face. In Saccharomyces cerevisiae (strain ATCC 204508 / S288c) (Baker's yeast), this protein is COMPASS component SDC1.